Consider the following 316-residue polypeptide: Olfactory receptor 51J1 (316 aa).

The Extracellular portion of the chain corresponds to 1 to 31; sequence MKISNNSLGFLPTTFILVGIPGLESEHLWIS. Asn-5 is a glycosylation site (N-linked (GlcNAc...) asparagine). A helical membrane pass occupies residues 32 to 52; it reads VPFSLIYIIIFLGNGIILHVI. At 53–63 the chain is on the cytoplasmic side; sequence RTDIALHQPMY. The chain crosses the membrane as a helical span at residues 64-84; the sequence is LFLAMLALAEVRVSASTLPTV. The Extracellular segment spans residues 85–104; it reads LGIFLFGNTEISLEACLFPD. Cysteines 100 and 191 form a disulfide. The helical transmembrane segment at 105-125 threads the bilayer; that stretch reads VLHPFFIHDGASCAAGHVFGP. Residues 126–161 are Cytoplasmic-facing; sequence LYSHLQPTELHSYPDTAQGLWHRSYYRTEKHYAHGS. The chain crosses the membrane as a helical span at residues 162–182; the sequence is VAHSLMASALLWPQCPLTFLL. At 183-191 the chain is on the extracellular side; sequence SAPQSYLSC. The chain crosses the membrane as a helical span at residues 192-212; that stretch reads GNISVNNIYGIFIVTSTFGLD. Residues 213–242 lie on the Cytoplasmic side of the membrane; the sequence is SLLIVISYGLILHTVLGIATGEGRKKALNT. The chain crosses the membrane as a helical span at residues 243 to 263; that stretch reads CGSHVCAVLAYYVPMIGLSIV. The Extracellular portion of the chain corresponds to 264-275; it reads HRLGHRVSPLLQ. A helical membrane pass occupies residues 276–296; the sequence is AMMANAYLFFPPVVNPIVYSI. The Cytoplasmic portion of the chain corresponds to 297–316; that stretch reads KTKEIHGAIVRMLLEKRRRV.

The protein belongs to the G-protein coupled receptor 1 family.

It localises to the cell membrane. Functionally, odorant receptor. The polypeptide is Olfactory receptor 51J1 (OR51J1) (Homo sapiens (Human)).